Reading from the N-terminus, the 290-residue chain is PIH1 domain-containing protein 1 (290 aa).

Residues S12 and S173 each carry the phosphoserine modification.

The protein belongs to the PIH1 family. Component of the R2TP complex composed at least of RUVBL1, RUVBL2, RPAP3 and PIHD1. Component of the PAQosome complex which is responsible for the biogenesis of several protein complexes and which consists of R2TP complex members RUVBL1, RUVBL2, RPAP3 and PIH1D1, URI complex members PFDN2, PFDN6, PDRG1, UXT and URI1 as well as ASDURF, POLR2E and DNAAF10/WDR92. Interacts with phosphorylated TELO2 and mediates interaction of TELO2 with the R2TP complex. Interacts with phosphorylated ECD, EFTUD2/SNRP116, RPB1 and UBR5 and with RPB1 in a phosphorylation-independent manner. Interacts with the core C/D box snoRNP particle components NOP58 and FBL and with RUVBL1/TIP49. Interacts with RPAP3 and DNAAF10. Interacts with histone H4 and with SWI/SNF complex member SMARCB1/SNF5. Interacts with the mTORC1 complex member RPTOR. Interacts with MSL1. In terms of tissue distribution, expressed at low levels in normal mammary epithelial cells (at protein level). Highest expression in lung, leukocyte and placenta. Expressed at lower levels in brain, prostate, colon, heart, small intestine, liver, ovary, pancreas, skeletal muscle, spleen, testis and thymus.

The protein resides in the nucleus. Functionally, involved in the assembly of C/D box small nucleolar ribonucleoprotein (snoRNP) particles. Recruits the SWI/SNF complex to the core promoter of rRNA genes and enhances pre-rRNA transcription. Mediates interaction of TELO2 with the R2TP complex which is necessary for the stability of MTOR and SMG1. Positively regulates the assembly and activity of the mTORC1 complex. The chain is PIH1 domain-containing protein 1 (PIH1D1) from Homo sapiens (Human).